Consider the following 290-residue polypeptide: Undecaprenyl-diphosphatase (290 aa).

8 consecutive transmembrane segments (helical) span residues 5 to 25 (IGIF…YFPI), 44 to 64 (GTAY…TYFY), 88 to 108 (VRLF…GLAL), 122 to 142 (LSVI…SESL), 152 to 172 (IRVI…VPGV), 195 to 215 (FSFL…LKVL), 226 to 246 (PIVA…AWLL), and 255 to 275 (LVFV…LAAG).

It belongs to the UppP family.

Its subcellular location is the cell inner membrane. It catalyses the reaction di-trans,octa-cis-undecaprenyl diphosphate + H2O = di-trans,octa-cis-undecaprenyl phosphate + phosphate + H(+). In terms of biological role, catalyzes the dephosphorylation of undecaprenyl diphosphate (UPP). Confers resistance to bacitracin. In Gloeobacter violaceus (strain ATCC 29082 / PCC 7421), this protein is Undecaprenyl-diphosphatase.